The primary structure comprises 705 residues: Elongation factor G (705 aa).

The tr-type G domain occupies 6 to 282; the sequence is NKVRNIGIMA…AVVDFLPSPL (277 aa). GTP-binding positions include 15–22, 79–83, and 133–136; these read AHIDAGKT, DTPGH, and NKMD.

The protein belongs to the TRAFAC class translation factor GTPase superfamily. Classic translation factor GTPase family. EF-G/EF-2 subfamily.

It localises to the cytoplasm. Its function is as follows. Catalyzes the GTP-dependent ribosomal translocation step during translation elongation. During this step, the ribosome changes from the pre-translocational (PRE) to the post-translocational (POST) state as the newly formed A-site-bound peptidyl-tRNA and P-site-bound deacylated tRNA move to the P and E sites, respectively. Catalyzes the coordinated movement of the two tRNA molecules, the mRNA and conformational changes in the ribosome. In Corynebacterium glutamicum (strain ATCC 13032 / DSM 20300 / JCM 1318 / BCRC 11384 / CCUG 27702 / LMG 3730 / NBRC 12168 / NCIMB 10025 / NRRL B-2784 / 534), this protein is Elongation factor G.